Reading from the N-terminus, the 238-residue chain is Uridylate kinase (238 aa).

12–15 (KLSG) lines the ATP pocket. Residues 20-25 (GQQGFG) form an involved in allosteric activation by GTP region. Gly-54 serves as a coordination point for UMP. Positions 55 and 59 each coordinate ATP. Residues Asp-74 and 135 to 142 (TGNPFFTT) contribute to the UMP site. 4 residues coordinate ATP: Thr-162, Asn-163, Tyr-168, and Asp-171.

This sequence belongs to the UMP kinase family. In terms of assembly, homohexamer.

It is found in the cytoplasm. It carries out the reaction UMP + ATP = UDP + ADP. It participates in pyrimidine metabolism; CTP biosynthesis via de novo pathway; UDP from UMP (UMPK route): step 1/1. Its activity is regulated as follows. Allosterically activated by GTP. Inhibited by UTP. Catalyzes the reversible phosphorylation of UMP to UDP. The chain is Uridylate kinase from Bradyrhizobium diazoefficiens (strain JCM 10833 / BCRC 13528 / IAM 13628 / NBRC 14792 / USDA 110).